A 499-amino-acid polypeptide reads, in one-letter code: tRNA-specific adenosine deaminase 1 (499 aa).

In terms of domain architecture, A to I editase spans 63–498; the sequence is SMGTGTKCIG…IRNPPDYHQF (436 aa). Position 87 (histidine 87) interacts with Zn(2+). Glutamate 89 (proton donor) is an active-site residue. The 1D-myo-inositol hexakisphosphate site is built by arginine 93 and arginine 94. Zn(2+) is bound at residue cysteine 142. Disordered regions lie at residues 170–194 and 212–237; these read PVQETENLEDSKDKRNCEDPASPVA and HHGTQESGPVKPDVSSSDLTKEEPDA. Residues 178–187 show a composition bias toward basic and acidic residues; it reads EDSKDKRNCE. Serine 191 carries the phosphoserine modification. Cysteine 294 is a Zn(2+) binding site. The 1D-myo-inositol hexakisphosphate site is built by lysine 297, arginine 300, lysine 430, and lysine 466.

The protein belongs to the ADAT1 family. It depends on 1D-myo-inositol hexakisphosphate as a cofactor.

It catalyses the reaction adenosine(37) in tRNA(Ala) + H2O + H(+) = inosine(37) in tRNA(Ala) + NH4(+). Specifically deaminates adenosine-37 to inosine in tRNA-Ala. The sequence is that of tRNA-specific adenosine deaminase 1 (Adat1) from Mus musculus (Mouse).